The following is a 715-amino-acid chain: Fatty acid oxidation complex subunit alpha (715 aa).

The tract at residues 1–194 (MHEQRAKPSA…RLGLVDDAVP (194 aa)) is enoyl-CoA hydratase. Residues 310 to 715 (HALHRIGILG…QGERFYPQGS (406 aa)) form a 3-hydroxyacyl-CoA dehydrogenase region.

It in the N-terminal section; belongs to the enoyl-CoA hydratase/isomerase family. In the central section; belongs to the 3-hydroxyacyl-CoA dehydrogenase family. In terms of assembly, heterotetramer of two alpha chains (FadJ) and two beta chains (FadI).

It is found in the cytoplasm. It carries out the reaction a (3S)-3-hydroxyacyl-CoA = a (2E)-enoyl-CoA + H2O. The enzyme catalyses a 4-saturated-(3S)-3-hydroxyacyl-CoA = a (3E)-enoyl-CoA + H2O. The catalysed reaction is a (3S)-3-hydroxyacyl-CoA + NAD(+) = a 3-oxoacyl-CoA + NADH + H(+). It catalyses the reaction (3S)-3-hydroxybutanoyl-CoA = (3R)-3-hydroxybutanoyl-CoA. The protein operates within lipid metabolism; fatty acid beta-oxidation. Functionally, catalyzes the formation of a hydroxyacyl-CoA by addition of water on enoyl-CoA. Also exhibits 3-hydroxyacyl-CoA epimerase and 3-hydroxyacyl-CoA dehydrogenase activities. The polypeptide is Fatty acid oxidation complex subunit alpha (Serratia proteamaculans (strain 568)).